The chain runs to 278 residues: Dermonecrotic toxin Ls4SicTox-alphaIII1ii (278 aa).

Residue histidine 5 is part of the active site. Mg(2+)-binding residues include glutamate 25 and aspartate 27. Histidine 40 acts as the Nucleophile in catalysis. A disulfide bridge links cysteine 44 with cysteine 50. Position 84 (aspartate 84) interacts with Mg(2+).

This sequence belongs to the arthropod phospholipase D family. Class I subfamily. It depends on Mg(2+) as a cofactor. As to expression, expressed by the venom gland.

Its subcellular location is the secreted. It carries out the reaction an N-(acyl)-sphingosylphosphocholine = an N-(acyl)-sphingosyl-1,3-cyclic phosphate + choline. It catalyses the reaction an N-(acyl)-sphingosylphosphoethanolamine = an N-(acyl)-sphingosyl-1,3-cyclic phosphate + ethanolamine. The catalysed reaction is a 1-acyl-sn-glycero-3-phosphocholine = a 1-acyl-sn-glycero-2,3-cyclic phosphate + choline. The enzyme catalyses a 1-acyl-sn-glycero-3-phosphoethanolamine = a 1-acyl-sn-glycero-2,3-cyclic phosphate + ethanolamine. Functionally, dermonecrotic toxins cleave the phosphodiester linkage between the phosphate and headgroup of certain phospholipids (sphingolipid and lysolipid substrates), forming an alcohol (often choline) and a cyclic phosphate. This toxin acts on sphingomyelin (SM). It may also act on ceramide phosphoethanolamine (CPE), lysophosphatidylcholine (LPC) and lysophosphatidylethanolamine (LPE), but not on lysophosphatidylserine (LPS), and lysophosphatidylglycerol (LPG). It acts by transphosphatidylation, releasing exclusively cyclic phosphate products as second products. Induces dermonecrosis, hemolysis, increased vascular permeability, edema, inflammatory response, and platelet aggregation. This is Dermonecrotic toxin Ls4SicTox-alphaIII1ii from Loxosceles sp. (strain 4 GJB-2008) (Recluse spider).